Reading from the N-terminus, the 407-residue chain is Phosphoglycerate kinase (407 aa).

Substrate-binding positions include 24 to 26 (DIN), Arg39, 60 to 63 (HQSR), Arg117, and Arg157. Residues Glu330 and 355–358 (GGHI) contribute to the ATP site.

This sequence belongs to the phosphoglycerate kinase family.

The protein resides in the cytoplasm. It catalyses the reaction (2R)-3-phosphoglycerate + ATP = (2R)-3-phospho-glyceroyl phosphate + ADP. It participates in carbohydrate degradation; glycolysis; pyruvate from D-glyceraldehyde 3-phosphate: step 2/5. This Archaeoglobus fulgidus (strain ATCC 49558 / DSM 4304 / JCM 9628 / NBRC 100126 / VC-16) protein is Phosphoglycerate kinase (pgk).